Consider the following 165-residue polypeptide: Cyclic pyranopterin monophosphate synthase (165 aa).

Substrate contacts are provided by residues 75-77 (MCH) and 115-116 (ME). The active site involves D130.

This sequence belongs to the MoaC family. As to quaternary structure, homohexamer; trimer of dimers.

The enzyme catalyses (8S)-3',8-cyclo-7,8-dihydroguanosine 5'-triphosphate = cyclic pyranopterin phosphate + diphosphate. It participates in cofactor biosynthesis; molybdopterin biosynthesis. Its function is as follows. Catalyzes the conversion of (8S)-3',8-cyclo-7,8-dihydroguanosine 5'-triphosphate to cyclic pyranopterin monophosphate (cPMP). This Halalkalibacterium halodurans (strain ATCC BAA-125 / DSM 18197 / FERM 7344 / JCM 9153 / C-125) (Bacillus halodurans) protein is Cyclic pyranopterin monophosphate synthase.